The primary structure comprises 130 residues: Fumarate reductase subunit D (130 aa).

Transmembrane regions (helical) follow at residues 35–55, 67–87, and 110–130; these read FAMI…LGVI, SFAT…LPMW, and IACY…IFMI.

It belongs to the FrdD family. As to quaternary structure, part of an enzyme complex containing four subunits: a flavoprotein (FrdA), an iron-sulfur protein (FrdB), and two hydrophobic anchor proteins (FrdC and FrdD).

Its subcellular location is the cell inner membrane. Anchors the catalytic components of the fumarate reductase complex to the cell membrane, binds quinones. The polypeptide is Fumarate reductase subunit D (Vibrio cholerae serotype O1 (strain M66-2)).